The chain runs to 206 residues: MTDLSITPLPAQAAPVQPASSAELVVLLDEAGNQIGTAPKSSVHGADTALHLAFSCHVFDDDGRLLVTRRALGKVAWPGVWTNSFCGHPAPAEPLPHAVRRRAEFELGLELRDVEPVLPFFRYRATDASGIVEHEICPVYTARTSSVPAPHPDEVLDLAWVEPGELATAVRAAPWAFSPWLVLQAQLLPFLGGHADARVRTEALVS.

Positions 44 and 51 each coordinate Mn(2+). Residues A49–L183 form the Nudix hydrolase domain. C86 is an active-site residue. Position 86 (C86) interacts with Mg(2+). A Mn(2+)-binding site is contributed by H88. A Mg(2+)-binding site is contributed by E106. Residues E133 and E135 each contribute to the Mn(2+) site. Residue E135 is part of the active site.

Belongs to the IPP isomerase type 1 family. Mg(2+) serves as cofactor. Requires Mn(2+) as cofactor.

Its subcellular location is the cytoplasm. It catalyses the reaction isopentenyl diphosphate = dimethylallyl diphosphate. It participates in isoprenoid biosynthesis; dimethylallyl diphosphate biosynthesis; dimethylallyl diphosphate from isopentenyl diphosphate: step 1/1. In terms of biological role, catalyzes the 1,3-allylic rearrangement of the homoallylic substrate isopentenyl (IPP) to its highly electrophilic allylic isomer, dimethylallyl diphosphate (DMAPP). This is Isopentenyl-diphosphate Delta-isomerase from Agromyces mediolanus (Corynebacterium mediolanum).